We begin with the raw amino-acid sequence, 20 residues long: Cytotoxin drCT-1 (20 aa).

This sequence belongs to the three-finger toxin family. Short-chain subfamily. Type IA cytotoxin sub-subfamily. Monomer in solution; Homodimer and oligomer in the presence of negatively charged lipids forming a pore with a size ranging between 20 and 30 Angstroms. As to expression, expressed by the venom gland.

The protein resides in the secreted. Its subcellular location is the target cell membrane. This three-finger cytotoxin has antiproliferative, cytotoxic and apoptotic activities. Both in vivo and in vitro experimental results suggests that this protein possess anticancer potential. Also shows neurotoxicity, cardiotoxicity and myotoxicity. The polypeptide is Cytotoxin drCT-1 (Daboia russelii (Russel's viper)).